A 348-amino-acid polypeptide reads, in one-letter code: tRNA N6-adenosine threonylcarbamoyltransferase (348 aa).

Fe cation contacts are provided by histidine 115 and histidine 119. Substrate is bound by residues 138 to 142 (LVSGG), aspartate 171, glycine 184, and asparagine 278. Residue aspartate 306 coordinates Fe cation.

It belongs to the KAE1 / TsaD family. Fe(2+) serves as cofactor.

The protein resides in the cytoplasm. The catalysed reaction is L-threonylcarbamoyladenylate + adenosine(37) in tRNA = N(6)-L-threonylcarbamoyladenosine(37) in tRNA + AMP + H(+). Required for the formation of a threonylcarbamoyl group on adenosine at position 37 (t(6)A37) in tRNAs that read codons beginning with adenine. Is involved in the transfer of the threonylcarbamoyl moiety of threonylcarbamoyl-AMP (TC-AMP) to the N6 group of A37, together with TsaE and TsaB. TsaD likely plays a direct catalytic role in this reaction. The sequence is that of tRNA N6-adenosine threonylcarbamoyltransferase from Methylibium petroleiphilum (strain ATCC BAA-1232 / LMG 22953 / PM1).